A 294-amino-acid polypeptide reads, in one-letter code: Single-stranded nucleic acid-binding protein (294 aa).

Residues 1 to 30 (MSAEIEEATNAVNNLSINDSEQQPRAPTHK) form a disordered region. Ser-2 is modified (N-acetylserine). Residues Ser-2 and Ser-16 each carry the phosphoserine modification. Over residues 10 to 25 (NAVNNLSINDSEQQPR) the composition is skewed to polar residues. The RRM 1 domain maps to 37–119 (DTIFIGNVAH…REIHIKRART (83 aa)). Position 49 is a phosphothreonine (Thr-49). Ser-66 bears the Phosphoserine mark. 2 positions are modified to phosphothreonine: Thr-91 and Thr-119. Arg-125 carries the post-translational modification Omega-N-methylarginine. The segment at 131–151 (RGGFRGRGGFRGGFRGGYRGG) is RNA-binding RGG-box. Arg-135, Arg-137, and Arg-141 each carry dimethylated arginine. The residue at position 145 (Arg-145) is a Dimethylated arginine; alternate. Residue Arg-145 is modified to Omega-N-methylarginine; alternate. Omega-N-methylarginine is present on Arg-149. A compositionally biased stretch (gly residues) spans 151–169 (GFRGRGNFRGRGGARGGFN). The disordered stretch occupies residues 151–171 (GFRGRGNFRGRGGARGGFNGQ). Arg-153, Arg-155, and Arg-159 each carry dimethylated arginine. A dimethylated arginine; alternate mark is found at Arg-161 and Arg-165. Residues Arg-161 and Arg-165 each carry the omega-N-methylarginine; alternate modification. An RRM 2 domain is found at 186 to 274 (DTLYINNVPF…RELTVDVAVI (89 aa)). Position 242 is a phosphothreonine (Thr-242). Ser-244 carries the phosphoserine modification. Residues 275 to 294 (RPENDEEEIEQETGSEEKQE) form a disordered region. Over residues 278-288 (NDEEEIEQETG) the composition is skewed to acidic residues. Thr-287 carries the post-translational modification Phosphothreonine. At Ser-289 the chain carries Phosphoserine.

It belongs to the RRM GAR family. As to quaternary structure, associated with snR10 and snR11 small nuclear RNAs.

The protein resides in the cytoplasm. Its subcellular location is the nucleus. The protein localises to the nucleolus. It localises to the P-body. It is found in the stress granule. Its function is as follows. Functions in the transition of mRNAs from translation to an mRNP complex destined for decapping. High-copy-number suppressor of decapping defects. Overexpression suppresses decapping defects in both DCP1-2 and DCP2-7 mutations. Acts to promote translational repression of mRNA in conjunction with DHH1 and subsequent mRNA localization to P bodies. Promotes translational repression of mRNA during glucose deprivation. This chain is Single-stranded nucleic acid-binding protein (SBP1), found in Saccharomyces cerevisiae (strain ATCC 204508 / S288c) (Baker's yeast).